Consider the following 557-residue polypeptide: Dihydroxy-acid dehydratase (557 aa).

Position 49 (cysteine 49) interacts with [2Fe-2S] cluster. Aspartate 81 is a binding site for Mg(2+). Residue cysteine 122 coordinates [2Fe-2S] cluster. Mg(2+) contacts are provided by aspartate 123 and lysine 124. Lysine 124 bears the N6-carboxylysine mark. [2Fe-2S] cluster is bound at residue cysteine 194. Glutamate 446 lines the Mg(2+) pocket. The active-site Proton acceptor is serine 472.

This sequence belongs to the IlvD/Edd family. As to quaternary structure, homodimer. Requires [2Fe-2S] cluster as cofactor. It depends on Mg(2+) as a cofactor.

The catalysed reaction is (2R)-2,3-dihydroxy-3-methylbutanoate = 3-methyl-2-oxobutanoate + H2O. It catalyses the reaction (2R,3R)-2,3-dihydroxy-3-methylpentanoate = (S)-3-methyl-2-oxopentanoate + H2O. It functions in the pathway amino-acid biosynthesis; L-isoleucine biosynthesis; L-isoleucine from 2-oxobutanoate: step 3/4. The protein operates within amino-acid biosynthesis; L-valine biosynthesis; L-valine from pyruvate: step 3/4. Functionally, functions in the biosynthesis of branched-chain amino acids. Catalyzes the dehydration of (2R,3R)-2,3-dihydroxy-3-methylpentanoate (2,3-dihydroxy-3-methylvalerate) into 2-oxo-3-methylpentanoate (2-oxo-3-methylvalerate) and of (2R)-2,3-dihydroxy-3-methylbutanoate (2,3-dihydroxyisovalerate) into 2-oxo-3-methylbutanoate (2-oxoisovalerate), the penultimate precursor to L-isoleucine and L-valine, respectively. This Prochlorococcus marinus (strain MIT 9312) protein is Dihydroxy-acid dehydratase.